The primary structure comprises 277 residues: Undecaprenyl-diphosphatase (277 aa).

5 helical membrane passes run 83-103, 109-129, 188-208, 218-238, and 256-276; these read FALN…VFAS, LFAP…ILWI, ATEF…VYSV, ADIP…FLCV, and YRIV…VVWA.

This sequence belongs to the UppP family.

It localises to the cell inner membrane. The enzyme catalyses di-trans,octa-cis-undecaprenyl diphosphate + H2O = di-trans,octa-cis-undecaprenyl phosphate + phosphate + H(+). Catalyzes the dephosphorylation of undecaprenyl diphosphate (UPP). Confers resistance to bacitracin. The polypeptide is Undecaprenyl-diphosphatase (Janthinobacterium sp. (strain Marseille) (Minibacterium massiliensis)).